We begin with the raw amino-acid sequence, 606 residues long: Serine/threonine-protein kinase A-Raf (606 aa).

In terms of domain architecture, RBD spans 19-91 (GTVKVYLPNK…DGEELIVEVL (73 aa)). A Phorbol-ester/DAG-type zinc finger spans residues 98–144 (MHNFVRKTFFSLAFCDFCLKFLFHGFRCQTCGYKFHQHCSSKVPTVC). Residues His-99, Cys-112, Cys-115, Cys-125, Cys-128, His-133, Cys-136, and Cys-144 each contribute to the Zn(2+) site. Phosphoserine is present on residues Ser-157 and Ser-162. Positions 160 to 207 (DLSGGSRQHEAPSNRPLNELLTPQGPSPRTQHCDPEHFPFPAPANAPL) are disordered. At Thr-181 the chain carries Phosphothreonine. Ser-186 and Ser-214 each carry phosphoserine. The tract at residues 240 to 290 (STDAAGSRGGSDGTPRGSPSPASVSSGRKSPHSKSPAEQRERKSLADDKKK) is disordered. Thr-253 carries the post-translational modification Phosphothreonine. A phosphoserine mark is found at Ser-257 and Ser-269. Residues 274-289 (SPAEQRERKSLADDKK) are compositionally biased toward basic and acidic residues. Positions 310 to 570 (VQLLKRIGTG…PQILATIELL (261 aa)) constitute a Protein kinase domain. ATP contacts are provided by residues 316–324 (IGTGSFGTV) and Lys-336. Thr-318 carries the phosphothreonine modification. Residue Asp-429 is the Proton acceptor of the active site.

It belongs to the protein kinase superfamily. TKL Ser/Thr protein kinase family. RAF subfamily. As to quaternary structure, interacts with TH1L/NELFD. The cofactor is Zn(2+). In terms of processing, dephosphorylation of Ser-214 by the SHOC2-MRAS-PP1c (SMP) complex consisting of SHOC2, GTP-bound M-Ras/MRAS and the catalytic subunit of protein phosphatase 1 (PPP1CA, PPP1CB or PPP1CC); this relieves inactivation and stimulates kinase activity. In terms of tissue distribution, predominantly in urogenital tissues.

The enzyme catalyses L-seryl-[protein] + ATP = O-phospho-L-seryl-[protein] + ADP + H(+). The catalysed reaction is L-threonyl-[protein] + ATP = O-phospho-L-threonyl-[protein] + ADP + H(+). Involved in the transduction of mitogenic signals from the cell membrane to the nucleus. May also regulate the TOR signaling cascade. Phosphorylates PFKFB2. Its function is as follows. Serves as a positive regulator of myogenic differentiation by inducing cell cycle arrest, the expression of myogenin and other muscle-specific proteins, and myotube formation. This chain is Serine/threonine-protein kinase A-Raf (ARAF), found in Homo sapiens (Human).